An 876-amino-acid polypeptide reads, in one-letter code: Leucine--tRNA ligase (876 aa).

Residues 1–20 (MATERYNPRDAEPRWQQKWN) form a disordered region. Positions 43–53 (PYPSGRIHMGH) match the 'HIGH' region motif. The short motif at 632 to 636 (KMSKS) is the 'KMSKS' region element. Lys-635 serves as a coordination point for ATP.

Belongs to the class-I aminoacyl-tRNA synthetase family.

It localises to the cytoplasm. It carries out the reaction tRNA(Leu) + L-leucine + ATP = L-leucyl-tRNA(Leu) + AMP + diphosphate. This chain is Leucine--tRNA ligase, found in Rhizobium leguminosarum bv. trifolii (strain WSM2304).